A 725-amino-acid chain; its full sequence is N-alpha-acetyltransferase 35, NatC auxiliary subunit (725 aa).

S187 is subject to Phosphoserine. Positions E548 to S573 are disordered. Over residues R558 to P571 the composition is skewed to basic residues.

This sequence belongs to the MAK10 family. Component of the N-terminal acetyltransferase C (NatC) complex, which is composed of NAA35, NAA38 and NAA30.

Its subcellular location is the cytoplasm. Functionally, auxillary component of the N-terminal acetyltransferase C (NatC) complex which catalyzes acetylation of N-terminal methionine residues. N-terminal acetylation protects proteins from ubiquitination and degradation by the N-end rule pathway. Involved in regulation of apoptosis and proliferation of smooth muscle cells. The sequence is that of N-alpha-acetyltransferase 35, NatC auxiliary subunit (NAA35) from Macaca fascicularis (Crab-eating macaque).